A 247-amino-acid chain; its full sequence is MADS-box protein defh21 (247 aa).

Residues 1-61 (MGRGKIEVKR…GKLTEYCTPP (61 aa)) enclose the MADS-box domain. Positions 91–183 (NDQVIKELTR…WLMSNQIQRQ (93 aa)) constitute a K-box domain.

In terms of tissue distribution, expressed exclusively in a few inner cell layers of the inner integuments of the ovules.

The protein resides in the nucleus. Probable transcription factor. In Antirrhinum majus (Garden snapdragon), this protein is MADS-box protein defh21 (DEFH21).